Consider the following 306-residue polypeptide: Glutaminase (306 aa).

Substrate contacts are provided by Ser62, Asn114, Glu159, Asn166, Tyr190, Tyr242, and Val260.

The protein belongs to the glutaminase family. In terms of assembly, homotetramer.

It carries out the reaction L-glutamine + H2O = L-glutamate + NH4(+). The chain is Glutaminase from Clostridium tetani (strain Massachusetts / E88).